A 349-amino-acid chain; its full sequence is uncharacterized protein (349 aa).

The first 25 residues, 1–25 (MNKYIKQGAPILGILLAVMFGGREG), serve as a signal peptide directing secretion.

This sequence belongs to the bacterial solute-binding protein 1 family. WtpA subfamily.

This is an uncharacterized protein from Methanococcus aeolicus (strain ATCC BAA-1280 / DSM 17508 / OCM 812 / Nankai-3).